Consider the following 871-residue polypeptide: Speckle targeted PIP5K1A-regulated poly(A) polymerase (871 aa).

A Matrin-type zinc finger spans residues 16-46; it reads FRCCLCHITTANQPSLDAHLGGRKHRHLVEL. Residues 56–128 enclose the RRM domain; it reads RSVFVSGFPR…RRLRVRPREQ (73 aa). Ser-205 is a binding site for ATP. Mg(2+) contacts are provided by Asp-216 and Asp-218. Residues Asp-216 and Asp-218 each contribute to the UTP site. Positions 252-321 are disordered; sequence QALACTPASP…QEDQGDGDQG (70 aa). The span at 259–269 shows a compositional bias: pro residues; that stretch reads ASPPDSQPPAS. ATP is bound at residue Asn-392. UTP is bound by residues Asn-392, Arg-414, Tyr-432, and His-547. The PAP-associated domain occupies 489-547; that stretch reads LSSLLAQFFSCVSCWDLRGSLLSLREGQALSVAGGLPSNLSEGLRLGPMNLQDPFDLSH. Residues 596–871 are KA1; binds the bulging loops of U6 snRNA but is dispensable for terminal uridylyltransferase activity; that stretch reads SSPSSILSAT…LPQALRNLLK (276 aa). Positions 636-684 are disordered; it reads GTKRLRSEGGGPGEPPQGGTSKRAKLDGQKKSCEEGPEEQQGCAGEHGE. The segment covering 659–669 has biased composition (basic and acidic residues); it reads AKLDGQKKSCE. Position 748 is a phosphoserine (Ser-748).

The protein belongs to the DNA polymerase type-B-like family. In terms of assembly, associates with the cleavage and polyadenylation specificity factor (CPSF) complex. Interacts with CPSF1 and CPSF3; the interaction is direct. Interacts with PIP5K1A. Mg(2+) is required as a cofactor. Requires Mn(2+) as cofactor. Phosphorylated by CK1 in the proline-rich (Pro-rich) region.

It localises to the nucleus. The protein resides in the nucleolus. Its subcellular location is the nucleus speckle. It catalyses the reaction RNA(n) + UTP = RNA(n)-3'-uridine ribonucleotide + diphosphate. It carries out the reaction RNA(n) + ATP = RNA(n)-3'-adenine ribonucleotide + diphosphate. Its activity is regulated as follows. Adenylyltransferase activity is specifically phosphatidylinositol 4,5-bisphosphate (PtdIns(4,5)P2). Its function is as follows. Poly(A) polymerase that creates the 3'-poly(A) tail of specific pre-mRNAs. Localizes to nuclear speckles together with PIP5K1A and mediates polyadenylation of a select set of mRNAs, such as HMOX1. In addition to polyadenylation, it is also required for the 3'-end cleavage of pre-mRNAs: binds to the 3'UTR of targeted pre-mRNAs and promotes the recruitment and assembly of the CPSF complex on the 3'UTR of pre-mRNAs. In addition to adenylyltransferase activity, also has uridylyltransferase activity. However, the ATP ratio is higher than UTP in cells, suggesting that it functions primarily as a poly(A) polymerase. Acts as a specific terminal uridylyltransferase for U6 snRNA in vitro: responsible for a controlled elongation reaction that results in the restoration of the four 3'-terminal UMP-residues found in newly transcribed U6 snRNA. Not involved in replication-dependent histone mRNA degradation. This is Speckle targeted PIP5K1A-regulated poly(A) polymerase (TUT1) from Bos taurus (Bovine).